The primary structure comprises 330 residues: Malate dehydrogenase (330 aa).

NAD(+) is bound at residue Gly12 to Gly18. Residues Arg93 and Arg99 each coordinate substrate. NAD(+)-binding positions include Asn106, Gln113, and Val130–Asn132. Positions 132 and 163 each coordinate substrate. The active-site Proton acceptor is His188.

Belongs to the LDH/MDH superfamily. MDH type 2 family.

It carries out the reaction (S)-malate + NAD(+) = oxaloacetate + NADH + H(+). Its function is as follows. Catalyzes the reversible oxidation of malate to oxaloacetate. The polypeptide is Malate dehydrogenase (Legionella pneumophila subsp. pneumophila (strain Philadelphia 1 / ATCC 33152 / DSM 7513)).